Here is a 291-residue protein sequence, read N- to C-terminus: Probable aquaporin PIP2-4 (291 aa).

M1 is modified (N-acetylmethionine). Residues 1 to 22 (MAKDLDVNESGPPAARDYKDPP) form a disordered region. A2 carries the N-acetylalanine; in Probable aquaporin PIP2-4, N-terminally processed modification. Over 2 to 39 (AKDLDVNESGPPAARDYKDPPPAPFFDMEELRKWPLYR) the chain is Cytoplasmic. K3 carries the post-translational modification N6,N6-dimethyllysine. The helical transmembrane segment at 40–60 (AVIAEFVATLLFLYVSILTVI) threads the bilayer. Residues 61-74 (GYKAQTDATAGGVD) lie on the Extracellular side of the membrane. Residues 75–95 (CGGVGILGIAWAFGGMIFVLV) traverse the membrane as a helical segment. Topologically, residues 96 to 125 (YCTAGISGGHINPAVTVGLFLARKVSLVRT) are cytoplasmic. An NPA 1 motif is present at residues 107 to 109 (NPA). A helical transmembrane segment spans residues 126 to 146 (VLYIVAQCLGAICGCGFVKAF). The Extracellular portion of the chain corresponds to 147–167 (QSSYYTRYGGGANELADGYNK). A helical membrane pass occupies residues 168–188 (GTGLGAEIIGTFVLVYTVFSA). The Cytoplasmic portion of the chain corresponds to 189-201 (TDPKRNARDSHVP). The helical transmembrane segment at 202–222 (VLAPLPIGFAVFMVHLATIPI) threads the bilayer. Over 223 to 249 (TGTGINPARSFGAAVIYNNEKAWDDQW) the chain is Extracellular. An NPA 2 motif is present at residues 228–230 (NPA). The chain crosses the membrane as a helical span at residues 250-270 (IFWVGPMIGAAAAAFYHQFIL). Over 271–291 (RAAAIKALGSFGSFGSFRSFA) the chain is Cytoplasmic. 3 positions are modified to phosphoserine: S283, S286, and S289.

It belongs to the MIP/aquaporin (TC 1.A.8) family. PIP (TC 1.A.8.11) subfamily. Expressed in roots.

The protein resides in the cell membrane. Aquaporins facilitate the transport of water and small neutral solutes across cell membranes. The sequence is that of Probable aquaporin PIP2-4 (PIP2-4) from Arabidopsis thaliana (Mouse-ear cress).